Here is a 913-residue protein sequence, read N- to C-terminus: Cadherin-4 (913 aa).

The signal sequence occupies residues Met1–Ala19. Residues Leu20–Arg166 constitute a propeptide that is removed on maturation. 5 consecutive Cadherin domains span residues Asp167–Phe274, Ile275–Phe389, Thr390–Phe504, Pro505–Pro610, and Glu611–Ala721. The Extracellular portion of the chain corresponds to Asp167–Ala731. 6 N-linked (GlcNAc...) asparagine glycosylation sites follow: Asn280, Asn409, Asn554, Asn629, Asn658, and Asn699. Residues Ile732–Met753 form a helical membrane-spanning segment. At Lys754 to Asp913 the chain is on the cytoplasmic side.

As to expression, embryonic brain and neuronal retina.

Its subcellular location is the cell membrane. Cadherins are calcium-dependent cell adhesion proteins. They preferentially interact with themselves in a homophilic manner in connecting cells; cadherins may thus contribute to the sorting of heterogeneous cell types. May play an important role in retinal development. The protein is Cadherin-4 (CDH4) of Gallus gallus (Chicken).